A 157-amino-acid polypeptide reads, in one-letter code: SsrA-binding protein (157 aa).

This sequence belongs to the SmpB family.

The protein resides in the cytoplasm. Required for rescue of stalled ribosomes mediated by trans-translation. Binds to transfer-messenger RNA (tmRNA), required for stable association of tmRNA with ribosomes. tmRNA and SmpB together mimic tRNA shape, replacing the anticodon stem-loop with SmpB. tmRNA is encoded by the ssrA gene; the 2 termini fold to resemble tRNA(Ala) and it encodes a 'tag peptide', a short internal open reading frame. During trans-translation Ala-aminoacylated tmRNA acts like a tRNA, entering the A-site of stalled ribosomes, displacing the stalled mRNA. The ribosome then switches to translate the ORF on the tmRNA; the nascent peptide is terminated with the 'tag peptide' encoded by the tmRNA and targeted for degradation. The ribosome is freed to recommence translation, which seems to be the essential function of trans-translation. This chain is SsrA-binding protein, found in Methylobacterium nodulans (strain LMG 21967 / CNCM I-2342 / ORS 2060).